The chain runs to 634 residues: Ankyrin repeat protein OPG025 (634 aa).

ANK repeat units follow at residues 36–69 (DGET…YKNI), 70–100 (NDFD…EINS), 103–134 (NGIN…PTCS), 175–211 (MGKT…EMRY), 307–337 (IQDL…TLYR), and 412–441 (HGCS…DINI).

The protein belongs to the orthopoxvirus OPG025 family. In terms of assembly, interacts with components of host SCF complex CUL1 and SKP1 and components of the cullin deneddylation/COP9 signalosome complex subunits COPS7A and COPS7B.

Functionally, plays a role in the inhibition of host immune repsonse by counteracting the action of interferons on early events in the viral replication cycle. This Vaccinia virus (strain Copenhagen) (VACV) protein is Ankyrin repeat protein OPG025 (OPG025).